Here is a 256-residue protein sequence, read N- to C-terminus: Eukaryotic translation initiation factor 3 subunit J (256 aa).

Composition is skewed to acidic residues over residues 1–14 and 35–54; these read MAENDSWDADDFEP and EGEDEEEDVKDNWDDEEEAE. 2 disordered regions span residues 1-109 and 214-237; these read MAEN…SPEE and QSKAKKKKKGVVPGGGLKANMKND. Residues 55–101 are compositionally biased toward basic and acidic residues; it reads AATKQEAQKTVEPKVSEKKKLLEKIREKEKLHKKRQEEVNQQEKEGT. Residues 70 to 99 adopt a coiled-coil conformation; that stretch reads SEKKKLLEKIREKEKLHKKRQEEVNQQEKE.

This sequence belongs to the eIF-3 subunit J family. As to quaternary structure, component of the eukaryotic translation initiation factor 3 (eIF-3) complex, which is composed of 13 subunits: eif3a, eif3b, eif3c, eif3d, eif3e, eif3f, eif3g, eif3h, eif3i, eif3j, eif3k, eif3l and eif3m.

The protein resides in the cytoplasm. Functionally, component of the eukaryotic translation initiation factor 3 (eIF-3) complex, which is involved in protein synthesis of a specialized repertoire of mRNAs and, together with other initiation factors, stimulates binding of mRNA and methionyl-tRNAi to the 40S ribosome. The eIF-3 complex specifically targets and initiates translation of a subset of mRNAs involved in cell proliferation. This Xenopus tropicalis (Western clawed frog) protein is Eukaryotic translation initiation factor 3 subunit J (eif3j).